Reading from the N-terminus, the 117-residue chain is Ig heavy chain V region MOPC 173 (117 aa).

Residues 1–116 enclose the Ig-like domain; that stretch reads EVKLLESGGP…WGQGTSVTVS (116 aa). A disulfide bond links C22 and C96.

This chain is Ig heavy chain V region MOPC 173, found in Mus musculus (Mouse).